We begin with the raw amino-acid sequence, 164 residues long: tRNA (cytidine(34)-2'-O)-methyltransferase (164 aa).

S-adenosyl-L-methionine is bound by residues methionine 80, glycine 102, valine 124, and serine 132.

This sequence belongs to the class IV-like SAM-binding methyltransferase superfamily. RNA methyltransferase TrmH family. TrmL subfamily. In terms of assembly, homodimer.

It localises to the cytoplasm. The enzyme catalyses cytidine(34) in tRNA + S-adenosyl-L-methionine = 2'-O-methylcytidine(34) in tRNA + S-adenosyl-L-homocysteine + H(+). The catalysed reaction is 5-carboxymethylaminomethyluridine(34) in tRNA(Leu) + S-adenosyl-L-methionine = 5-carboxymethylaminomethyl-2'-O-methyluridine(34) in tRNA(Leu) + S-adenosyl-L-homocysteine + H(+). Methylates the ribose at the nucleotide 34 wobble position in the two leucyl isoacceptors tRNA(Leu)(CmAA) and tRNA(Leu)(cmnm5UmAA). Catalyzes the methyl transfer from S-adenosyl-L-methionine to the 2'-OH of the wobble nucleotide. In Polaromonas sp. (strain JS666 / ATCC BAA-500), this protein is tRNA (cytidine(34)-2'-O)-methyltransferase.